The primary structure comprises 147 residues: Small ribosomal subunit protein bS16m (147 aa).

Belongs to the bacterial ribosomal protein bS16 family. As to quaternary structure, component of the mitochondrial ribosome small subunit (28S) which comprises a 12S rRNA and about 30 distinct proteins.

The protein resides in the mitochondrion. The sequence is that of Small ribosomal subunit protein bS16m (mrps-16) from Caenorhabditis elegans.